Here is a 312-residue protein sequence, read N- to C-terminus: tRNA dimethylallyltransferase (312 aa).

Residue 18-25 (GPTASGKS) coordinates ATP. 20-25 (TASGKS) is a binding site for substrate. Interaction with substrate tRNA stretches follow at residues 43–46 (DSMQ) and 167–171 (QRILR).

Belongs to the IPP transferase family. As to quaternary structure, monomer. Mg(2+) serves as cofactor.

It carries out the reaction adenosine(37) in tRNA + dimethylallyl diphosphate = N(6)-dimethylallyladenosine(37) in tRNA + diphosphate. Its function is as follows. Catalyzes the transfer of a dimethylallyl group onto the adenine at position 37 in tRNAs that read codons beginning with uridine, leading to the formation of N6-(dimethylallyl)adenosine (i(6)A). The sequence is that of tRNA dimethylallyltransferase from Azorhizobium caulinodans (strain ATCC 43989 / DSM 5975 / JCM 20966 / LMG 6465 / NBRC 14845 / NCIMB 13405 / ORS 571).